Reading from the N-terminus, the 1320-residue chain is Protein brunelleschi (1320 aa).

A disordered region spans residues 313 to 411 (HRNSSLQEAG…IPGHQRNGDL (99 aa)). Residues 314–327 (RNSSLQEAGTSPLK) show a composition bias toward polar residues. Ser317 bears the Phosphoserine mark. Residue Thr329 is modified to Phosphothreonine. Basic and acidic residues predominate over residues 329–340 (TPEKWRASDATK). Positions 345–361 (SDATANNVDSNQPQQRV) are enriched in polar residues. The segment covering 362 to 400 (TSNSSSCSSVSSLVTTATNSSASDTPTTSSSSTSTISAA) has biased composition (low complexity). Phosphoserine is present on Ser672. The segment at 923-954 (VSTSGHASLPSRVGSPHHRRNEPQNSSFRSTI) is disordered. The span at 945–954 (PQNSSFRSTI) shows a compositional bias: polar residues.

It belongs to the NIBP family. As to quaternary structure, may be part of the multisubunit TRAPP (transport protein particle) complex.

It is found in the cytoplasm. It localises to the golgi apparatus. Functionally, cooperates with Rab11 and fwd/PI4K to mediate the flow of membrane through the Golgi, which is required to support cleavage furrow ingression, therefore promoting cytokinesis in male meiotic cells. This chain is Protein brunelleschi, found in Drosophila melanogaster (Fruit fly).